The following is a 371-amino-acid chain: Tetraacyldisaccharide 4'-kinase (371 aa).

Residue 63-70 participates in ATP binding; sequence AVGGAGKT.

It belongs to the LpxK family.

It carries out the reaction a lipid A disaccharide + ATP = a lipid IVA + ADP + H(+). The protein operates within glycolipid biosynthesis; lipid IV(A) biosynthesis; lipid IV(A) from (3R)-3-hydroxytetradecanoyl-[acyl-carrier-protein] and UDP-N-acetyl-alpha-D-glucosamine: step 6/6. Its function is as follows. Transfers the gamma-phosphate of ATP to the 4'-position of a tetraacyldisaccharide 1-phosphate intermediate (termed DS-1-P) to form tetraacyldisaccharide 1,4'-bis-phosphate (lipid IVA). The chain is Tetraacyldisaccharide 4'-kinase from Anaeromyxobacter sp. (strain Fw109-5).